The following is a 375-amino-acid chain: Saccharopine dehydrogenase [NAD(+), L-lysine-forming] (375 aa).

L-saccharopine is bound by residues arginine 18 and lysine 78. The active-site Proton acceptor is the lysine 78. Histidine 96 acts as the Proton donor in catalysis. Glutamine 101 lines the L-saccharopine pocket. Arginine 130 is a binding site for NAD(+). L-saccharopine-binding residues include arginine 131 and phenylalanine 135. Residues 203 to 204 (GR), aspartate 227, threonine 231, tyrosine 252, and valine 279 each bind NAD(+). Cysteine 205 and cysteine 250 are oxidised to a cystine. 280–282 (SAD) serves as a coordination point for L-saccharopine. Residue 322-325 (IDHL) participates in NAD(+) binding.

Belongs to the AlaDH/PNT family. Monomer.

It catalyses the reaction L-saccharopine + NAD(+) + H2O = L-lysine + 2-oxoglutarate + NADH + H(+). It functions in the pathway amino-acid biosynthesis; L-lysine biosynthesis via AAA pathway; L-lysine from L-alpha-aminoadipate (fungal route): step 3/3. Functionally, catalyzes the NAD(+)-dependent cleavage of saccharopine to L-lysine and 2-oxoglutarate, the final step in the alpha-aminoadipate (AAA) pathway for lysin biosynthesis. The protein is Saccharopine dehydrogenase [NAD(+), L-lysine-forming] of Emericella nidulans (strain FGSC A4 / ATCC 38163 / CBS 112.46 / NRRL 194 / M139) (Aspergillus nidulans).